We begin with the raw amino-acid sequence, 618 residues long: MTQEYDNKRPVLVLQNEALYPQRRSYTSEDEAWKSFLENPLTAATKAMMSINGDEDSAAALGLLYDYYKVPRERRSSTAKPEVEHPEPDHSKRNSIPIVTEQPLISAGENRVQVLKNVPFNIVLPHGNQLGIDKRGHLTVPDTTVTVSIATMPTHSIKTETQPHGFTVGIPPAVYHPEPTERVVVFDRNLSTDQFSSGAQAPNAQRRTPDSTFSETFKEGVQEVFFPSDLSLRMPGMNSEDYVFDSVSGNNFEYTLEASKSLRQKPGDSTMTYLNKGQFYPITLKEVSSNEGIHHPISKVRSVTMVVFAEDKSREDQLRHWKYWHSRQHTAKQRCIDIADYKESFNTISNIEEIAYNAISFTWDINDEAKVFISVNCLSTDFSSQKGVKGLPLNIQIDTYSYNNRSNKPVHRAYCQIKVFCDKGAERKIRDEERKQSKRKVSDVKVPLLPSHKRMDITVFKPFIDLDTQPVLFIPDVHFASLQRGTHVLPIASEELEGEGSVLKRGPYSTEDDFAVPPSAKLARIEEPKRVLLYVRKESEEVFDALMLKTPSLKGLMEAISDKYDVPHDKIGKIFKKCKKGILVNMDDNIVKHYSNEDTFQLQIEEAGGSYKLTLIEI.

A transcription activation region spans residues 1 to 91 (MTQEYDNKRP…EVEHPEPDHS (91 aa)). Residues 74–92 (RRSSTAKPEVEHPEPDHSK) show a composition bias toward basic and acidic residues. A disordered region spans residues 74–94 (RRSSTAKPEVEHPEPDHSKRN). Thr208 carries the phosphothreonine modification. A Grh/CP2 DB domain is found at 248-474 (SGNNFEYTLE…DLDTQPVLFI (227 aa)). 2 interaction with DNA regions span residues 380–389 (TDFSSQKGVK) and 427–430 (RKIR).

It belongs to the grh/CP2 family. Grainyhead subfamily. As to quaternary structure, binds DNA as homodimer. Homodimer, also forms heterodimers with GRHL2 or GRHL3. In terms of processing, methylation at Arg-9 and Lys-116 may be involved in regulating transcriptional activation.

The protein resides in the nucleus. Transcription factor involved in epithelial development. Binds directly to the consensus DNA sequence 5'-AACCGGTT-3'. Important regulator of DSG1 in the context of hair anchorage and epidermal differentiation, participates in the maintenance of the skin barrier. There is no genetic interaction with GRHL3, nor functional cooperativity due to diverse target gene selectivity during epithelia development. May play a role in regulating glucose homeostasis and insulin signaling. In Pongo abelii (Sumatran orangutan), this protein is Grainyhead-like protein 1 homolog (GRHL1).